We begin with the raw amino-acid sequence, 255 residues long: Protein N-terminal and lysine N-methyltransferase efm7 (255 aa).

The disordered stretch occupies residues M1–P25. S-adenosyl-L-methionine contacts are provided by residues W58, G84–G86, D106, W137, and S162.

It belongs to the class I-like SAM-binding methyltransferase superfamily. EFM7 family.

It localises to the cytoplasm. Its function is as follows. S-adenosyl-L-methionine-dependent protein methyltransferase that trimethylates the N-terminal glycine 'Gly-2' of elongation factor 1-alpha, before also catalyzing the mono- and dimethylation of 'Lys-3'. The protein is Protein N-terminal and lysine N-methyltransferase efm7 of Schizosaccharomyces pombe (strain 972 / ATCC 24843) (Fission yeast).